Here is a 194-residue protein sequence, read N- to C-terminus: Fe/S biogenesis protein NfuA (194 aa).

[4Fe-4S] cluster is bound by residues Cys152 and Cys155.

Belongs to the NfuA family. In terms of assembly, homodimer. [4Fe-4S] cluster is required as a cofactor.

Involved in iron-sulfur cluster biogenesis. Binds a 4Fe-4S cluster, can transfer this cluster to apoproteins, and thereby intervenes in the maturation of Fe/S proteins. Could also act as a scaffold/chaperone for damaged Fe/S proteins. The polypeptide is Fe/S biogenesis protein NfuA (Pseudomonas entomophila (strain L48)).